The following is a 1517-amino-acid chain: DNA-directed RNA polymerase subunit beta' (1517 aa).

Cysteine 71, cysteine 73, cysteine 86, and cysteine 89 together coordinate Zn(2+). Positions 482, 484, and 486 each coordinate Mg(2+). Zn(2+) contacts are provided by cysteine 812, cysteine 886, cysteine 893, and cysteine 896.

It belongs to the RNA polymerase beta' chain family. The RNAP catalytic core consists of 2 alpha, 1 beta, 1 beta' and 1 omega subunit. When a sigma factor is associated with the core the holoenzyme is formed, which can initiate transcription. Mg(2+) serves as cofactor. The cofactor is Zn(2+).

The enzyme catalyses RNA(n) + a ribonucleoside 5'-triphosphate = RNA(n+1) + diphosphate. Functionally, DNA-dependent RNA polymerase catalyzes the transcription of DNA into RNA using the four ribonucleoside triphosphates as substrates. The sequence is that of DNA-directed RNA polymerase subunit beta' from Campylobacter jejuni subsp. jejuni serotype O:6 (strain 81116 / NCTC 11828).